The following is a 410-amino-acid chain: Elongation factor Tu, chloroplastic (410 aa).

The region spanning 10–215 (KPHVNIGTIG…AVDQYIPTPK (206 aa)) is the tr-type G domain. The segment at 19-26 (GHVDHGKT) is G1. 19–26 (GHVDHGKT) provides a ligand contact to GTP. Thr26 lines the Mg(2+) pocket. Residues 61-65 (GITIN) form a G2 region. Residues 82-85 (DCPG) form a G3 region. GTP is bound by residues 82–86 (DCPGH) and 137–140 (NKQD). The tract at residues 137 to 140 (NKQD) is G4. Positions 175 to 177 (SAL) are G5.

Belongs to the TRAFAC class translation factor GTPase superfamily. Classic translation factor GTPase family. EF-Tu/EF-1A subfamily.

The protein localises to the plastid. The protein resides in the chloroplast. It carries out the reaction GTP + H2O = GDP + phosphate + H(+). In terms of biological role, GTP hydrolase that promotes the GTP-dependent binding of aminoacyl-tRNA to the A-site of ribosomes during protein biosynthesis. The chain is Elongation factor Tu, chloroplastic (tufA) from Nephroselmis olivacea (Green alga).